The chain runs to 282 residues: 2-dehydro-3-deoxyphosphooctonate aldolase (282 aa).

This sequence belongs to the KdsA family.

The protein localises to the cytoplasm. The enzyme catalyses D-arabinose 5-phosphate + phosphoenolpyruvate + H2O = 3-deoxy-alpha-D-manno-2-octulosonate-8-phosphate + phosphate. It functions in the pathway carbohydrate biosynthesis; 3-deoxy-D-manno-octulosonate biosynthesis; 3-deoxy-D-manno-octulosonate from D-ribulose 5-phosphate: step 2/3. Its pathway is bacterial outer membrane biogenesis; lipopolysaccharide biosynthesis. The sequence is that of 2-dehydro-3-deoxyphosphooctonate aldolase from Shewanella piezotolerans (strain WP3 / JCM 13877).